A 629-amino-acid chain; its full sequence is Chaperone protein HtpG (629 aa).

Residues 1 to 343 (MQKQTLSFQA…SSDLPLNVSR (343 aa)) form an a; substrate-binding region. A b region spans residues 344–558 (ELLQESRAVK…DGDMSTQLAR (215 aa)). A c region spans residues 559–629 (MLKQAGQTVP…YVRRVNALLV (71 aa)).

The protein belongs to the heat shock protein 90 family. As to quaternary structure, homodimer.

It is found in the cytoplasm. Molecular chaperone. Has ATPase activity. The sequence is that of Chaperone protein HtpG from Polaromonas naphthalenivorans (strain CJ2).